We begin with the raw amino-acid sequence, 500 residues long: Protein-cysteine N-palmitoyltransferase Rasp (500 aa).

A run of 10 helical transmembrane segments spans residues 15-35, 73-93, 105-125, 134-154, 206-226, 243-263, 293-313, 372-392, 429-449, and 461-481; these read IFVY…KIYG, GDFI…QGFI, FIGV…MVLL, IVSL…WILC, SLVQ…GPII, LGFV…QCAL, FMGQ…IAFA, LTFA…IWSI, LYAM…VYFI, and GAYL…YCFF. His-381 is an active-site residue.

Belongs to the membrane-bound acyltransferase family. HHAT subfamily.

The protein resides in the membrane. The catalysed reaction is N-terminal L-cysteinyl-[protein] + hexadecanoyl-CoA = N-terminal N-hexadecanoyl-L-cysteinyl-[protein] + CoA + H(+). The enzyme catalyses N-terminal L-cysteinyl-[protein]-C-terminal glycyl cholesterol ester + hexadecanoyl-CoA = N-terminal N-hexadecanoyl-L-cysteinyl-[protein]-C-terminal glycyl cholesterol ester + CoA + H(+). Its function is as follows. Required in hedgehog (hh) expressing cells for production of appropriate signaling activity in embryos and in the imaginal precursors of adult tissues. Acts within the secretory pathway to catalyze N-terminal palmitoylation of Hh; this lipid modification is required for the embryonic and larval patterning activities of the Hh signal. Not required for Wg signaling. The polypeptide is Protein-cysteine N-palmitoyltransferase Rasp (rasp) (Drosophila melanogaster (Fruit fly)).